Consider the following 569-residue polypeptide: MEGEERGYWRWSKRDFFPEESFQSFGSYRAALSQTCSRFKNRLVSRSDDENERFELKKQSEHEMKRCLTWWDLVWFGFGSVIGAGIFVLTGQEAHEQAGPAIVLSYVVSGLSAMLSVFCYTEFAVEIPVAGGSFAYLRIELGDFAAFITAGNILLESIVGTAAVARAWTSYFATLLNRSPNALRIKTDLSSGFNLLDPIAVVVIAASATIASISTRKTSLLNWIASAINTLVIFFVIIAGFIHADTSNLTPFLPFGPEGVFRAAAVVYFAYGGFDSIATMAEETKNPSRDIPIGLLGSMSIITVIYCLMALSLSMMQKYTDIDPNAAYSVAFQSVGMKWGKYLVALGALKGMTTVLLVGALGQARYVTHIARTHMIPPIFALVHPKTGTPINANLLVAIPSALIAFFSGLDVLASLLSISTLFIFTMMPIALLVRRYYVRQDTPRVHLIKLITCLLFVVVSSMGTSAYWGMQRKGSWIGYTVTVPFWFLGTLGIVFFVPQQRTPKVWGVPLVPWLPCLSIATNIFLMGSLGAMAFVRFGVCTLAMLLYYFLLGLHATFDMAHQQIVPRT.

At 1–67 the chain is on the cytoplasmic side; that stretch reads MEGEERGYWR…KQSEHEMKRC (67 aa). A helical membrane pass occupies residues 68–88; that stretch reads LTWWDLVWFGFGSVIGAGIFV. The Extracellular segment spans residues 89-97; sequence LTGQEAHEQ. A helical membrane pass occupies residues 98 to 118; that stretch reads AGPAIVLSYVVSGLSAMLSVF. Residues 119–143 are Cytoplasmic-facing; that stretch reads CYTEFAVEIPVAGGSFAYLRIELGD. Residues 144 to 164 traverse the membrane as a helical segment; it reads FAAFITAGNILLESIVGTAAV. Topologically, residues 165 to 192 are extracellular; sequence ARAWTSYFATLLNRSPNALRIKTDLSSG. The chain crosses the membrane as a helical span at residues 193–213; the sequence is FNLLDPIAVVVIAASATIASI. The Cytoplasmic portion of the chain corresponds to 214–222; sequence STRKTSLLN. Residues 223–243 form a helical membrane-spanning segment; it reads WIASAINTLVIFFVIIAGFIH. At 244–251 the chain is on the extracellular side; it reads ADTSNLTP. Residues 252–272 form a helical membrane-spanning segment; it reads FLPFGPEGVFRAAAVVYFAYG. At 273 to 290 the chain is on the cytoplasmic side; the sequence is GFDSIATMAEETKNPSRD. The helical transmembrane segment at 291 to 311 threads the bilayer; the sequence is IPIGLLGSMSIITVIYCLMAL. The Extracellular portion of the chain corresponds to 312-341; the sequence is SLSMMQKYTDIDPNAAYSVAFQSVGMKWGK. Residues 342 to 362 form a helical membrane-spanning segment; sequence YLVALGALKGMTTVLLVGALG. The Cytoplasmic portion of the chain corresponds to 363-389; it reads QARYVTHIARTHMIPPIFALVHPKTGT. Residues 390–410 form a helical membrane-spanning segment; that stretch reads PINANLLVAIPSALIAFFSGL. Residue aspartate 411 is a topological domain, extracellular. The chain crosses the membrane as a helical span at residues 412–432; the sequence is VLASLLSISTLFIFTMMPIAL. Topologically, residues 433–450 are cytoplasmic; the sequence is LVRRYYVRQDTPRVHLIK. Residues 451-471 form a helical membrane-spanning segment; that stretch reads LITCLLFVVVSSMGTSAYWGM. Residues 472–477 are Extracellular-facing; it reads QRKGSW. The helical transmembrane segment at 478–498 threads the bilayer; the sequence is IGYTVTVPFWFLGTLGIVFFV. Over 499-505 the chain is Cytoplasmic; it reads PQQRTPK. The chain crosses the membrane as a helical span at residues 506 to 526; the sequence is VWGVPLVPWLPCLSIATNIFL. The Extracellular segment spans residues 527 to 537; the sequence is MGSLGAMAFVR. The helical transmembrane segment at 538 to 558 threads the bilayer; the sequence is FGVCTLAMLLYYFLLGLHATF. The Cytoplasmic portion of the chain corresponds to 559–569; the sequence is DMAHQQIVPRT.

Belongs to the amino acid-polyamine-organocation (APC) superfamily. Cationic amino acid transporter (CAT) (TC 2.A.3.3) family. In terms of tissue distribution, expressed in roots, stems, flowers, seeds, and leaves. Mostly present in leaf rims and cotyledons of developing seedlings.

The protein localises to the cell membrane. Functionally, high-affinity permease involved in the transport of the cationic amino acids (e.g. arginine, and, to a lower extent, citrulline and glutamate). Transport mostly basic amino acids, and, to a lower extent neutral and acidic amino acids. In Arabidopsis thaliana (Mouse-ear cress), this protein is Cationic amino acid transporter 5 (CAT5).